The sequence spans 213 residues: MIHYPATAQSQFEAQGLGYIPMVIEQSGRGERSYDIYSRLLKERIIFLVGPVNDATANLVVAQLLFLEAENPDKDIYFYINSPGGSVTAGMGIYDTMQFVKPDVSTLCVGQAASMGALLLAAGAQGKRFCLPNSRVMIHQPLGGFQGQASDIEIHAKEILFLREKLNHILASHTGQPVEKIALDTDRDNFMSAEQSVAYGIVDKVIASRADAA.

Serine 114 (nucleophile) is an active-site residue. Histidine 139 is an active-site residue.

Belongs to the peptidase S14 family. In terms of assembly, fourteen ClpP subunits assemble into 2 heptameric rings which stack back to back to give a disk-like structure with a central cavity, resembling the structure of eukaryotic proteasomes.

The protein resides in the cytoplasm. The catalysed reaction is Hydrolysis of proteins to small peptides in the presence of ATP and magnesium. alpha-casein is the usual test substrate. In the absence of ATP, only oligopeptides shorter than five residues are hydrolyzed (such as succinyl-Leu-Tyr-|-NHMec, and Leu-Tyr-Leu-|-Tyr-Trp, in which cleavage of the -Tyr-|-Leu- and -Tyr-|-Trp bonds also occurs).. Functionally, cleaves peptides in various proteins in a process that requires ATP hydrolysis. Has a chymotrypsin-like activity. Plays a major role in the degradation of misfolded proteins. This Methylobacillus flagellatus (strain ATCC 51484 / DSM 6875 / VKM B-1610 / KT) protein is ATP-dependent Clp protease proteolytic subunit.